A 277-amino-acid polypeptide reads, in one-letter code: Large ribosomal subunit protein uL2 (277 aa).

A disordered region spans residues 222–277; that stretch reads GVAMNPVDHPHGGGEGRTSGGRHPVTPWGKPTKGKKTRSNKATDKFIMRSRHQRKK.

It belongs to the universal ribosomal protein uL2 family. In terms of assembly, part of the 50S ribosomal subunit. Forms a bridge to the 30S subunit in the 70S ribosome.

Its function is as follows. One of the primary rRNA binding proteins. Required for association of the 30S and 50S subunits to form the 70S ribosome, for tRNA binding and peptide bond formation. It has been suggested to have peptidyltransferase activity; this is somewhat controversial. Makes several contacts with the 16S rRNA in the 70S ribosome. This Brucella ovis (strain ATCC 25840 / 63/290 / NCTC 10512) protein is Large ribosomal subunit protein uL2.